We begin with the raw amino-acid sequence, 115 residues long: NADH-ubiquinone oxidoreductase chain 3 (115 aa).

The next 3 helical transmembrane spans lie at 3-23, 56-76, and 84-104; these read LILM…IVAF, FFLV…LLPL, and PTLM…GLIY.

This sequence belongs to the complex I subunit 3 family.

The protein resides in the mitochondrion membrane. The enzyme catalyses a ubiquinone + NADH + 5 H(+)(in) = a ubiquinol + NAD(+) + 4 H(+)(out). Core subunit of the mitochondrial membrane respiratory chain NADH dehydrogenase (Complex I) that is believed to belong to the minimal assembly required for catalysis. Complex I functions in the transfer of electrons from NADH to the respiratory chain. The immediate electron acceptor for the enzyme is believed to be ubiquinone. The protein is NADH-ubiquinone oxidoreductase chain 3 (MT-ND3) of Polypterus ornatipinnis (Ornate bichir).